A 275-amino-acid chain; its full sequence is Nitrogenase iron protein 3 (275 aa).

9–16 (GKGGIGKS) provides a ligand contact to ATP. [4Fe-4S] cluster is bound at residue C97. R100 is modified (ADP-ribosylarginine; by dinitrogenase reductase ADP-ribosyltransferase). C132 contributes to the [4Fe-4S] cluster binding site.

It belongs to the NifH/BchL/ChlL family. In terms of assembly, homodimer. [4Fe-4S] cluster serves as cofactor. In terms of processing, the reversible ADP-ribosylation of Arg-100 inactivates the nitrogenase reductase and regulates nitrogenase activity.

It catalyses the reaction N2 + 8 reduced [2Fe-2S]-[ferredoxin] + 16 ATP + 16 H2O = H2 + 8 oxidized [2Fe-2S]-[ferredoxin] + 2 NH4(+) + 16 ADP + 16 phosphate + 6 H(+). Functionally, the key enzymatic reactions in nitrogen fixation are catalyzed by the nitrogenase complex, which has 2 components: the iron protein and the molybdenum-iron protein. The protein is Nitrogenase iron protein 3 (nifH3) of Clostridium pasteurianum.